The sequence spans 662 residues: Glycogen debranching enzyme (662 aa).

The active-site Nucleophile is Asp-338. Glu-373 acts as the Proton donor in catalysis.

It belongs to the glycosyl hydrolase 13 family.

The enzyme catalyses Hydrolysis of (1-&gt;6)-alpha-D-glucosidic linkages to branches with degrees of polymerization of three or four glucose residues in limit dextrin.. Its pathway is glycan degradation; glycogen degradation. Its function is as follows. Removes maltotriose and maltotetraose chains that are attached by 1,6-alpha-linkage to the limit dextrin main chain, generating a debranched limit dextrin. This chain is Glycogen debranching enzyme, found in Yersinia pseudotuberculosis serotype I (strain IP32953).